The chain runs to 217 residues: Adenylate kinase (217 aa).

Position 10-15 (10-15 (GAGKGT)) interacts with ATP. Residues 30 to 59 (STGDMFREAIKRGTPLGRQAEVYIKGGRLV) form an NMP region. Residues threonine 31, arginine 36, 57–59 (RLV), 85–88 (GFPR), and glutamine 92 contribute to the AMP site. The interval 126-163 (GRRVCRQCGATYHVRYNPPAVPGKCDACGQDLVQRADD) is LID. Arginine 127 provides a ligand contact to ATP. Residues cysteine 130 and cysteine 133 each contribute to the Zn(2+) site. 136–137 (TY) is an ATP binding site. Zn(2+) contacts are provided by cysteine 150 and cysteine 153. 2 residues coordinate AMP: arginine 160 and arginine 171. Glutamine 199 serves as a coordination point for ATP.

Belongs to the adenylate kinase family. In terms of assembly, monomer.

The protein localises to the cytoplasm. It catalyses the reaction AMP + ATP = 2 ADP. It participates in purine metabolism; AMP biosynthesis via salvage pathway; AMP from ADP: step 1/1. Catalyzes the reversible transfer of the terminal phosphate group between ATP and AMP. Plays an important role in cellular energy homeostasis and in adenine nucleotide metabolism. This is Adenylate kinase from Moorella thermoacetica (strain ATCC 39073 / JCM 9320).